Reading from the N-terminus, the 193-residue chain is Potassium-transporting ATPase KdpC subunit (193 aa).

Residues 14-34 form a helical membrane-spanning segment; sequence ITFTFLVLCGLVYPLIVTGIA.

Belongs to the KdpC family. As to quaternary structure, the system is composed of three essential subunits: KdpA, KdpB and KdpC.

It localises to the cell membrane. Its function is as follows. Part of the high-affinity ATP-driven potassium transport (or Kdp) system, which catalyzes the hydrolysis of ATP coupled with the electrogenic transport of potassium into the cytoplasm. This subunit acts as a catalytic chaperone that increases the ATP-binding affinity of the ATP-hydrolyzing subunit KdpB by the formation of a transient KdpB/KdpC/ATP ternary complex. This Bacillus mycoides (strain KBAB4) (Bacillus weihenstephanensis) protein is Potassium-transporting ATPase KdpC subunit.